The sequence spans 36 residues: Light-harvesting protein B-1015 gamma chain (36 aa).

Functionally, one of the components of the bacteriochlorophyll-protein complex in the chromatophore membrane. This chain is Light-harvesting protein B-1015 gamma chain, found in Blastochloris viridis (Rhodopseudomonas viridis).